The primary structure comprises 162 residues: MRIGLYPGTFDPLTLGHLDIIQRAMALVDRLVIGVAINRDKGPLFSLEERVRMVETECRAIAANGGEIVVHPFENLLIDCARDVGASVIVRGLRAVADFEYEFQMVGMNRALDAGIETVFLMADARRQAIASKLVKEIARLGGDVSSFVTPDVGAALVAKYR.

Thr-9 contacts substrate. ATP is bound by residues 9–10 (TF) and His-17. The substrate site is built by Lys-41, Leu-77, and Arg-91. ATP is bound by residues 92 to 94 (GLR), Glu-102, and 127 to 133 (RQAIASK).

It belongs to the bacterial CoaD family. As to quaternary structure, homohexamer. It depends on Mg(2+) as a cofactor.

The protein resides in the cytoplasm. The enzyme catalyses (R)-4'-phosphopantetheine + ATP + H(+) = 3'-dephospho-CoA + diphosphate. Its pathway is cofactor biosynthesis; coenzyme A biosynthesis; CoA from (R)-pantothenate: step 4/5. Functionally, reversibly transfers an adenylyl group from ATP to 4'-phosphopantetheine, yielding dephospho-CoA (dPCoA) and pyrophosphate. The polypeptide is Phosphopantetheine adenylyltransferase (Cereibacter sphaeroides (strain ATCC 17029 / ATH 2.4.9) (Rhodobacter sphaeroides)).